A 211-amino-acid polypeptide reads, in one-letter code: Urease accessory protein UreG (211 aa).

Gly11–Thr18 is a binding site for GTP.

This sequence belongs to the SIMIBI class G3E GTPase family. UreG subfamily. In terms of assembly, homodimer. UreD, UreF and UreG form a complex that acts as a GTP-hydrolysis-dependent molecular chaperone, activating the urease apoprotein by helping to assemble the nickel containing metallocenter of UreC. The UreE protein probably delivers the nickel.

It is found in the cytoplasm. Functionally, facilitates the functional incorporation of the urease nickel metallocenter. This process requires GTP hydrolysis, probably effectuated by UreG. This is Urease accessory protein UreG from Actinobacillus pleuropneumoniae serotype 3 (strain JL03).